The chain runs to 373 residues: Peptidoglycan recognition protein 4 (373 aa).

A signal peptide spans Met1 to Gly17. N-linked (GlcNAc...) asparagine glycans are attached at residues Asn22, Asn39, Asn109, Asn145, and Asn247. N-acetylmuramoyl-L-alanine amidase domains follow at residues Thr74 to Gly212 and Tyr235 to Gly358. Intrachain disulfides connect Cys210/Cys332, Cys226/Cys270, and Cys246/Cys252. The peptidoglycan site is built by Tyr263 and Tyr274. Interaction with murein stretches follow at residues Gln293–Asp302 and Arg353–Thr354.

It belongs to the N-acetylmuramoyl-L-alanine amidase 2 family. As to quaternary structure, homodimer; disulfide-linked. Heterodimer with PGLYRP3; disulfide-linked. Post-translationally, N-glycosylated. Detected in skin epidermis, eccrine sweat glands and ducts, mucous cells in the submandibular salivary gland, mucous cells in the throat, ciliary body epithelial cells of the eye, small intestine, colon, stomach and in mature epithelial cells of the tongue (at protein level). High expression in skin and esophagus. Expressed also to a much lesser extent in the tonsils and thymus.

The protein resides in the secreted. In terms of biological role, pattern receptor that binds to murein peptidoglycans (PGN) of Gram-positive bacteria. Has bactericidal activity towards Gram-positive bacteria. May kill Gram-positive bacteria by interfering with peptidoglycan biosynthesis. Also binds to Gram-negative bacteria, and has bacteriostatic activity towards Gram-negative bacteria. Plays a role in innate immunity. The polypeptide is Peptidoglycan recognition protein 4 (PGLYRP4) (Homo sapiens (Human)).